We begin with the raw amino-acid sequence, 461 residues long: Vimentin (461 aa).

2 stretches are compositionally biased toward low complexity: residues 1 to 14 and 35 to 52; these read MNRTTSRQTTSSSS and SSRQYSSPVRSSRMSYSV. The disordered stretch occupies residues 1–52; that stretch reads MNRTTSRQTTSSSSYKRMFGGEGRPSVGMARSTLSSRQYSSPVRSSRMSYSV. The tract at residues 1–91 is head; the sequence is MNRTTSRQTT…FALSDAINSE (91 aa). The interval 92–127 is coil 1A; that stretch reads FKANRTNEKAEMQHLNDRFASYIDKVRFLEQQNKIL. Residues 92–127 are a coiled coil; the sequence is FKANRTNEKAEMQHLNDRFASYIDKVRFLEQQNKIL. The region spanning 99–407 is the IF rod domain; the sequence is EKAEMQHLND…KLLEGEESRI (309 aa). A linker 1 region spans residues 128 to 149; the sequence is LAELEQLKGKGASRIGDLYEDE. Residues 150–241 are a coiled coil; it reads MRDLRRQVDQ…KLHDEEVAEL (92 aa). The tract at residues 150–241 is coil 1B; the sequence is MRDLRRQVDQ…KLHDEEVAEL (92 aa). Positions 242-264 are linker 12; it reads QAQIQDQHVQIDMDVAKPDLTAA. A coil 2 region spans residues 265-403; the sequence is LRDVRVQYET…ATYRKLLEGE (139 aa). A coiled-coil region spans residues 299 to 403; it reads NRNTDAIRQA…ATYRKLLEGE (105 aa). The segment at 404-461 is tail; that stretch reads ESRITTPMPNFSSFNLRESMLEARPMIDNLSKKVVIKTIETRDGHVINESTQNHDDLE.

This sequence belongs to the intermediate filament family. Homomer assembled from elementary dimers. One of the most prominent phosphoproteins in various cells of mesenchymal origin. Phosphorylation is enhanced during cell division, at which time vimentin filaments are significantly reorganized.

It localises to the cytoplasm. It is found in the cytoskeleton. Its subcellular location is the nucleus matrix. In terms of biological role, vimentins are class-III intermediate filaments found in various non-epithelial cells, especially mesenchymal cells. Vimentin is attached to the nucleus, endoplasmic reticulum, and mitochondria, either laterally or terminally. The sequence is that of Vimentin (vim) from Oncorhynchus mykiss (Rainbow trout).